Here is a 223-residue protein sequence, read N- to C-terminus: Phosphoribosylformylglycinamidine synthase subunit PurQ (223 aa).

In terms of domain architecture, Glutamine amidotransferase type-1 spans 3 to 223 (SAVILLPGLN…LFAGALGITA (221 aa)). Residue Cys-87 is the Nucleophile of the active site. Catalysis depends on residues His-197 and Glu-199.

In terms of assembly, part of the FGAM synthase complex composed of 1 PurL, 1 PurQ and 2 PurS subunits.

The protein localises to the cytoplasm. It catalyses the reaction N(2)-formyl-N(1)-(5-phospho-beta-D-ribosyl)glycinamide + L-glutamine + ATP + H2O = 2-formamido-N(1)-(5-O-phospho-beta-D-ribosyl)acetamidine + L-glutamate + ADP + phosphate + H(+). The enzyme catalyses L-glutamine + H2O = L-glutamate + NH4(+). Its pathway is purine metabolism; IMP biosynthesis via de novo pathway; 5-amino-1-(5-phospho-D-ribosyl)imidazole from N(2)-formyl-N(1)-(5-phospho-D-ribosyl)glycinamide: step 1/2. Functionally, part of the phosphoribosylformylglycinamidine synthase complex involved in the purines biosynthetic pathway. Catalyzes the ATP-dependent conversion of formylglycinamide ribonucleotide (FGAR) and glutamine to yield formylglycinamidine ribonucleotide (FGAM) and glutamate. The FGAM synthase complex is composed of three subunits. PurQ produces an ammonia molecule by converting glutamine to glutamate. PurL transfers the ammonia molecule to FGAR to form FGAM in an ATP-dependent manner. PurS interacts with PurQ and PurL and is thought to assist in the transfer of the ammonia molecule from PurQ to PurL. This chain is Phosphoribosylformylglycinamidine synthase subunit PurQ, found in Brucella abortus biovar 1 (strain 9-941).